The following is a 228-amino-acid chain: Isoprenyl transferase (228 aa).

Aspartate 9 is a catalytic residue. Aspartate 9 contacts Mg(2+). Residues 10-13, tryptophan 14, arginine 22, histidine 26, and 54-56 each bind substrate; these read GNGR and STE. Asparagine 57 acts as the Proton acceptor in catalysis. Substrate-binding positions include tryptophan 58, arginine 60, arginine 175, and 181–183; that span reads RMS. Residue glutamate 194 participates in Mg(2+) binding.

This sequence belongs to the UPP synthase family. In terms of assembly, homodimer. It depends on Mg(2+) as a cofactor.

In terms of biological role, catalyzes the condensation of isopentenyl diphosphate (IPP) with allylic pyrophosphates generating different type of terpenoids. The protein is Isoprenyl transferase of Treponema pallidum (strain Nichols).